A 360-amino-acid polypeptide reads, in one-letter code: UDP-N-acetylglucosamine--N-acetylmuramyl-(pentapeptide) pyrophosphoryl-undecaprenol N-acetylglucosamine transferase (360 aa).

UDP-N-acetyl-alpha-D-glucosamine contacts are provided by S198 and Q289.

It belongs to the glycosyltransferase 28 family. MurG subfamily.

The protein localises to the cell membrane. The catalysed reaction is Mur2Ac(oyl-L-Ala-gamma-D-Glu-L-Lys-D-Ala-D-Ala)-di-trans,octa-cis-undecaprenyl diphosphate + UDP-N-acetyl-alpha-D-glucosamine = beta-D-GlcNAc-(1-&gt;4)-Mur2Ac(oyl-L-Ala-gamma-D-Glu-L-Lys-D-Ala-D-Ala)-di-trans,octa-cis-undecaprenyl diphosphate + UDP + H(+). It functions in the pathway cell wall biogenesis; peptidoglycan biosynthesis. In terms of biological role, cell wall formation. Catalyzes the transfer of a GlcNAc subunit on undecaprenyl-pyrophosphoryl-MurNAc-pentapeptide (lipid intermediate I) to form undecaprenyl-pyrophosphoryl-MurNAc-(pentapeptide)GlcNAc (lipid intermediate II). The chain is UDP-N-acetylglucosamine--N-acetylmuramyl-(pentapeptide) pyrophosphoryl-undecaprenol N-acetylglucosamine transferase from Streptococcus pyogenes serotype M6 (strain ATCC BAA-946 / MGAS10394).